Reading from the N-terminus, the 97-residue chain is Co-chaperonin GroES (97 aa).

The protein belongs to the GroES chaperonin family. As to quaternary structure, heptamer of 7 subunits arranged in a ring. Interacts with the chaperonin GroEL.

It localises to the cytoplasm. Together with the chaperonin GroEL, plays an essential role in assisting protein folding. The GroEL-GroES system forms a nano-cage that allows encapsulation of the non-native substrate proteins and provides a physical environment optimized to promote and accelerate protein folding. GroES binds to the apical surface of the GroEL ring, thereby capping the opening of the GroEL channel. This Aeromonas hydrophila subsp. hydrophila (strain ATCC 7966 / DSM 30187 / BCRC 13018 / CCUG 14551 / JCM 1027 / KCTC 2358 / NCIMB 9240 / NCTC 8049) protein is Co-chaperonin GroES.